The primary structure comprises 352 residues: Endophilin-A1 (352 aa).

Positions 1–21 (MSVAGLKKQFHKATQKVSEKV) are membrane-binding amphipathic helix. Residues 1–27 (MSVAGLKKQFHKATQKVSEKVGGAEGT) are disordered. The tract at residues 1-125 (MSVAGLKKQF…EVGEAMRELS (125 aa)) is binds and tubulates liposomes. The BAR domain occupies 18-249 (SEKVGGAEGT…LEERIRQASS (232 aa)). The interval 60–87 (PNPASRAKLSMINTMSKIRGQEKGPGYP) is required for dimerization upon membrane association. Residues 181 to 248 (EELRQALEKF…RLEERIRQAS (68 aa)) adopt a coiled-coil conformation. Positions 245–257 (RQASSQPRREYQP) are enriched in basic and acidic residues. A disordered region spans residues 245 to 289 (RQASSQPRREYQPKPRMSLEFPTGDSTQPNGGLSHTGTPKPSGVQ). Serine 262 carries the phosphoserine modification. Over residues 268 to 283 (GDSTQPNGGLSHTGTP) the composition is skewed to polar residues. Residues 290–349 (MDQPCCRALYDFEPENEGELGFKEGDIITLTNQIDENWYEGMLHGHSGFFPINYVEILVA) enclose the SH3 domain. At tyrosine 299 the chain carries Phosphotyrosine.

This sequence belongs to the endophilin family. In terms of assembly, monomer; in cytoplasm. Homodimer; when associated with membranes. Interacts with OPHN1. Interacts with SYNJ1. Interacts with DNM1. Interacts with MAP4K3; the interaction appears to regulate MAP4K3-mediated JNK activation. Interacts with PDCD6IP. Interacts with ATXN2. Interacts with ADAM9 and ADAM15 cytoplasmic tails. Interacts with BIN2. Interacts with TMEM108. Interacts with ADGRB2. In terms of tissue distribution, brain, mostly in frontal cortex. Expressed at high level in fetal cerebellum.

The protein resides in the cytoplasm. The protein localises to the membrane. Its subcellular location is the early endosome. It is found in the presynapse. Functionally, implicated in synaptic vesicle endocytosis. May recruit other proteins to membranes with high curvature. Required for BDNF-dependent dendrite outgrowth. Cooperates with SH3GL2 to mediate BDNF-NTRK2 early endocytic trafficking and signaling from early endosomes. This is Endophilin-A1 (SH3GL2) from Homo sapiens (Human).